We begin with the raw amino-acid sequence, 1200 residues long: Ice nucleation protein (1200 aa).

The octapeptide periodicity stretch occupies residues 176 to 1151; that stretch reads ATYGSTLSGD…LSAGEDSILI (976 aa).

Belongs to the bacterial ice nucleation protein family.

It localises to the cell outer membrane. In terms of biological role, ice nucleation proteins enable bacteria to nucleate crystallization in supercooled water. This is Ice nucleation protein (inaZ) from Pseudomonas syringae pv. syringae.